Consider the following 105-residue polypeptide: Thioredoxin (105 aa).

The 104-residue stretch at 2–105 (VKQIESKYAF…KLEATINELI (104 aa)) folds into the Thioredoxin domain. K3 carries the N6-acetyllysine modification. The residue at position 8 (K8) is an N6-succinyllysine. Catalysis depends on nucleophile residues C32 and C35. C32 and C35 are joined by a disulfide. K39 bears the N6-acetyllysine mark. An S-nitrosocysteine mark is found at C62 and C69. S-nitrosocysteine; alternate is present on C73. K94 is subject to N6-acetyllysine; alternate. The residue at position 94 (K94) is an N6-succinyllysine; alternate.

The protein belongs to the thioredoxin family. Homodimer; disulfide-linked. Interacts with TXNIP through the redox-active site. Interacts with MAP3K5 and CASP3. Interacts with APEX1; the interaction stimulates the FOS/JUN AP-1 DNA-binding activity in a redox-dependent manner. In terms of processing, in the fully reduced protein, both Cys-69 and Cys-73 are nitrosylated in response to nitric oxide (NO). When two disulfide bonds are present in the protein, only Cys-73 is nitrosylated. Cys-73 can serve as donor for nitrosylation of target proteins. As to expression, erythrocytes.

It localises to the nucleus. It is found in the cytoplasm. Its subcellular location is the secreted. In terms of biological role, participates in various redox reactions through the reversible oxidation of its active center dithiol to a disulfide and catalyzes dithiol-disulfide exchange reactions. Plays a role in the reversible S-nitrosylation of cysteine residues in target proteins, and thereby contributes to the response to intracellular nitric oxide. Nitrosylates the active site Cys of CASP3 in response to nitric oxide (NO), and thereby inhibits caspase-3 activity. Induces the FOS/JUN AP-1 DNA binding activity in ionizing radiation (IR) cells through its oxidation/reduction status and stimulates AP-1 transcriptional activity. This chain is Thioredoxin (TXN), found in Sus scrofa (Pig).